The following is a 539-amino-acid chain: CTP synthase (539 aa).

The segment at 1–268 (MSFKSIFLTG…SDFLLNKLGF (268 aa)) is amidoligase domain. Ser-14 lines the CTP pocket. Ser-14 is a UTP binding site. Residue 15–20 (SLGKGL) participates in ATP binding. Tyr-55 provides a ligand contact to L-glutamine. Residue Asp-72 coordinates ATP. Mg(2+) is bound by residues Asp-72 and Glu-142. Residues 149–151 (DIE), 188–193 (KTKPTQ), and Lys-224 each bind CTP. Residues 188–193 (KTKPTQ) and Lys-224 contribute to the UTP site. In terms of domain architecture, Glutamine amidotransferase type-1 spans 294–532 (RIGLVGKYLE…IRAAKAYSLE (239 aa)). Gly-353 is a binding site for L-glutamine. The active-site Nucleophile; for glutamine hydrolysis is Cys-380. L-glutamine is bound by residues 381–384 (LGMQ), Glu-404, and Arg-460. Residues His-505 and Glu-507 contribute to the active site.

Belongs to the CTP synthase family. As to quaternary structure, homotetramer.

It catalyses the reaction UTP + L-glutamine + ATP + H2O = CTP + L-glutamate + ADP + phosphate + 2 H(+). It carries out the reaction L-glutamine + H2O = L-glutamate + NH4(+). The catalysed reaction is UTP + NH4(+) + ATP = CTP + ADP + phosphate + 2 H(+). Its pathway is pyrimidine metabolism; CTP biosynthesis via de novo pathway; CTP from UDP: step 2/2. Allosterically activated by GTP, when glutamine is the substrate; GTP has no effect on the reaction when ammonia is the substrate. The allosteric effector GTP functions by stabilizing the protein conformation that binds the tetrahedral intermediate(s) formed during glutamine hydrolysis. Inhibited by the product CTP, via allosteric rather than competitive inhibition. Its function is as follows. Catalyzes the ATP-dependent amination of UTP to CTP with either L-glutamine or ammonia as the source of nitrogen. Regulates intracellular CTP levels through interactions with the four ribonucleotide triphosphates. The polypeptide is CTP synthase (Chlamydia trachomatis serovar A (strain ATCC VR-571B / DSM 19440 / HAR-13)).